Consider the following 273-residue polypeptide: tRNA (guanine-N(7)-)-methyltransferase (273 aa).

The segment at 1-32 (MSATAKKSAAQLQREEEEARKKLKRLSKQGGV) is disordered. S-adenosyl-L-methionine is bound by residues Gly-88, 111 to 112 (EI), 150 to 151 (NC), and Cys-170. Residue Asp-173 is part of the active site. S-adenosyl-L-methionine is bound at residue 248 to 250 (TEE).

It belongs to the class I-like SAM-binding methyltransferase superfamily. TrmB family. Forms a complex with trm82.

The protein resides in the nucleus. It catalyses the reaction guanosine(46) in tRNA + S-adenosyl-L-methionine = N(7)-methylguanosine(46) in tRNA + S-adenosyl-L-homocysteine. Its pathway is tRNA modification; N(7)-methylguanine-tRNA biosynthesis. In terms of biological role, catalyzes the formation of N(7)-methylguanine at position 46 (m7G46) in tRNA. The protein is tRNA (guanine-N(7)-)-methyltransferase (trm8) of Schizosaccharomyces pombe (strain 972 / ATCC 24843) (Fission yeast).